Here is a 246-residue protein sequence, read N- to C-terminus: Phosphonates import ATP-binding protein PhnC (246 aa).

The 245-residue stretch at 2-246 (IKFENVSKVY…ILDEVYRKEG (245 aa)) folds into the ABC transporter domain. 35–42 (GTSGAGKS) lines the ATP pocket.

The protein belongs to the ABC transporter superfamily. Phosphonates importer (TC 3.A.1.9.1) family. The complex is composed of two ATP-binding proteins (PhnC), two transmembrane proteins (PhnE) and a solute-binding protein (PhnD).

It is found in the cell membrane. It carries out the reaction phosphonate(out) + ATP + H2O = phosphonate(in) + ADP + phosphate + H(+). In terms of biological role, part of the ABC transporter complex PhnCDE involved in phosphonates import. Responsible for energy coupling to the transport system. The polypeptide is Phosphonates import ATP-binding protein PhnC (Lactococcus lactis subsp. cremoris (strain SK11)).